A 61-amino-acid polypeptide reads, in one-letter code: Small ribosomal subunit protein uS14 (61 aa).

A compositionally biased stretch (acidic residues) spans 1 to 12 (MSESETTDEPDS). The interval 1-25 (MSESETTDEPDSETASSERTGQLES) is disordered. Zn(2+) contacts are provided by Cys26, Cys29, Cys44, and Cys47.

Belongs to the universal ribosomal protein uS14 family. Zinc-binding uS14 subfamily. In terms of assembly, part of the 30S ribosomal subunit. Requires Zn(2+) as cofactor.

In terms of biological role, binds 16S rRNA, required for the assembly of 30S particles. The sequence is that of Small ribosomal subunit protein uS14 from Haloarcula marismortui (strain ATCC 43049 / DSM 3752 / JCM 8966 / VKM B-1809) (Halobacterium marismortui).